A 387-amino-acid polypeptide reads, in one-letter code: RNA polymerase II elongation factor ELL3 (387 aa).

Disordered stretches follow at residues 127 to 148 (LTEG…EGHP) and 186 to 275 (LSNR…EEVP). The segment covering 230–239 (SPLQGLSNQD) has biased composition (polar residues). Ser240 bears the Phosphoserine mark. The segment covering 240–251 (SPEEQDWGQDAD) has biased composition (acidic residues). A compositionally biased stretch (low complexity) spans 257–271 (EQSLSVQSASESPSP). An OCEL domain is found at 275-385 (PDYLLQYSTI…LILEFEEKNR (111 aa)).

It belongs to the ELL/occludin family. Interacts with AFF4. Component of the super elongation complex (SEC), at least composed of EAF1, EAF2, CDK9, MLLT3/AF9, AFF (AFF1 or AFF4), the P-TEFb complex and ELL (ELL, ELL2 or ELL3). Component of the little elongation complex (LEC), at least composed of ELL (ELL, ELL2 or ELL3), ZC3H8, ICE1 and ICE2.

Its subcellular location is the nucleus. In terms of biological role, enhancer-binding elongation factor that specifically binds enhancers in embryonic stem cells (ES cells), marks them, and is required for their future activation during stem cell specification. Elongation factor component of the super elongation complex (SEC), a complex required to increase the catalytic rate of RNA polymerase II transcription by suppressing transient pausing by the polymerase at multiple sites along the DNA. Component of the little elongation complex (LEC), a complex required to regulate small nuclear RNA (snRNA) gene transcription by RNA polymerase II and III. Does not only bind to enhancer regions of active genes, but also marks the enhancers that are in a poised or inactive state in ES cells and is required for establishing proper RNA polymerase II occupancy at developmentally regulated genes in a cohesin-dependent manner. Probably required for priming developmentally regulated genes for later recruitment of the super elongation complex (SEC), for transcriptional activation during differentiation. Required for recruitment of P-TEFb within SEC during differentiation. Probably preloaded on germ cell chromatin, suggesting that it may prime gene activation by marking enhancers as early as in the germ cells. Promoting epithelial-mesenchymal transition (EMT). This chain is RNA polymerase II elongation factor ELL3 (Ell3), found in Rattus norvegicus (Rat).